The primary structure comprises 242 residues: uncharacterized protein (242 aa).

The region spanning 2–69 (YRLAKIISNA…KPRLWIYYKP (68 aa)) is the S4 RNA-binding domain. Catalysis depends on aspartate 102, which acts as the Nucleophile.

The protein belongs to the pseudouridine synthase RsuA family.

The catalysed reaction is a uridine in RNA = a pseudouridine in RNA. This is an uncharacterized protein from Rickettsia typhi (strain ATCC VR-144 / Wilmington).